A 510-amino-acid polypeptide reads, in one-letter code: 2,3-bisphosphoglycerate-independent phosphoglycerate mutase (510 aa).

Asp-12 serves as a coordination point for Mn(2+). Tyr-36 is subject to Phosphotyrosine. Mn(2+) is bound at residue Ser-62. Ser-62 serves as the catalytic Phosphoserine intermediate. Substrate-binding positions include His-123, 153-154 (RD), Arg-185, Arg-191, 261-264 (RPDR), and Lys-336. Residues Asp-403, His-407, Asp-444, His-445, and His-462 each coordinate Mn(2+).

Belongs to the BPG-independent phosphoglycerate mutase family. As to quaternary structure, monomer. Requires Mn(2+) as cofactor.

It carries out the reaction (2R)-2-phosphoglycerate = (2R)-3-phosphoglycerate. It participates in carbohydrate degradation; glycolysis; pyruvate from D-glyceraldehyde 3-phosphate: step 3/5. Its function is as follows. Essential for rapid growth and for sporulation. Catalyzes the interconversion of 2-phosphoglycerate and 3-phosphoglycerate. The polypeptide is 2,3-bisphosphoglycerate-independent phosphoglycerate mutase (Shouchella clausii (strain KSM-K16) (Alkalihalobacillus clausii)).